The following is a 230-amino-acid chain: Large ribosomal subunit protein uL1 (230 aa).

Belongs to the universal ribosomal protein uL1 family. Part of the 50S ribosomal subunit.

Binds directly to 23S rRNA. The L1 stalk is quite mobile in the ribosome, and is involved in E site tRNA release. Its function is as follows. Protein L1 is also a translational repressor protein, it controls the translation of the L11 operon by binding to its mRNA. This Lactobacillus acidophilus (strain ATCC 700396 / NCK56 / N2 / NCFM) protein is Large ribosomal subunit protein uL1.